The following is a 297-amino-acid chain: 4-diphosphocytidyl-2-C-methyl-D-erythritol kinase (297 aa).

The active site involves Lys-22. An ATP-binding site is contributed by 111–121; the sequence is PSQAGMGGGSS. The active site involves Asp-153.

The protein belongs to the GHMP kinase family. IspE subfamily.

The enzyme catalyses 4-CDP-2-C-methyl-D-erythritol + ATP = 4-CDP-2-C-methyl-D-erythritol 2-phosphate + ADP + H(+). Its pathway is isoprenoid biosynthesis; isopentenyl diphosphate biosynthesis via DXP pathway; isopentenyl diphosphate from 1-deoxy-D-xylulose 5-phosphate: step 3/6. Its function is as follows. Catalyzes the phosphorylation of the position 2 hydroxy group of 4-diphosphocytidyl-2C-methyl-D-erythritol. This Polaromonas naphthalenivorans (strain CJ2) protein is 4-diphosphocytidyl-2-C-methyl-D-erythritol kinase.